The primary structure comprises 424 residues: UDP-N-acetylglucosamine 1-carboxyvinyltransferase (424 aa).

A phosphoenolpyruvate-binding site is contributed by 22–23 (KN). Arg93 lines the UDP-N-acetyl-alpha-D-glucosamine pocket. Cys117 functions as the Proton donor in the catalytic mechanism. Cys117 is subject to 2-(S-cysteinyl)pyruvic acid O-phosphothioketal. UDP-N-acetyl-alpha-D-glucosamine-binding positions include 162–165 (KVSV), Asp307, and Ile329.

Belongs to the EPSP synthase family. MurA subfamily.

It is found in the cytoplasm. It catalyses the reaction phosphoenolpyruvate + UDP-N-acetyl-alpha-D-glucosamine = UDP-N-acetyl-3-O-(1-carboxyvinyl)-alpha-D-glucosamine + phosphate. Its pathway is cell wall biogenesis; peptidoglycan biosynthesis. Cell wall formation. Adds enolpyruvyl to UDP-N-acetylglucosamine. This is UDP-N-acetylglucosamine 1-carboxyvinyltransferase from Actinobacillus pleuropneumoniae serotype 5b (strain L20).